Reading from the N-terminus, the 4857-residue chain is Dual E2 ubiquitin-conjugating enzyme/E3 ubiquitin-protein ligase BIRC6 (4857 aa).

WD repeat units lie at residues 68–106 (DGLH…QASA) and 107–136 (LSAK…AVGC). One copy of the BIR repeat lies at 268–377 (PELGVGPGRS…LSVTLATSPA (110 aa)). Residues Cys328, Cys331, His348, and Cys355 each contribute to the Zn(2+) site. Residues 379-426 (FPCTDGTDRISCFGSGSCPHFLAAATKRGKICIWDVSKLMKVHLKFEI) form a WD 3 repeat. Disordered regions lie at residues 465 to 498 (DIPK…TSQK) and 579 to 618 (ATSP…NSEL). Over residues 472–482 (DSDDLLEDSDS) the composition is skewed to acidic residues. Phosphoserine is present on residues Ser473, Ser480, Ser482, Ser581, and Ser590. WD repeat units lie at residues 501–720 (MEVS…VQCL), 730–850 (NLCI…QHIK), 851–927 (DPQD…AKVE), and 928–966 (PPKK…FLQI). Residues 579-588 (ATSPISSNSH) are compositionally biased toward polar residues. A compositionally biased stretch (polar residues) spans 595 to 618 (SRTQGESISEQGSTDNESCTNSEL). Disordered stretches follow at residues 984–1004 (LSKG…PSSP) and 1053–1073 (QQQR…AAQH). Residues 992–1004 (SEGSKPLSNPSSP) are compositionally biased toward polar residues. Over residues 1056–1065 (RRHPQHLHQQ) the composition is skewed to basic residues. At Thr1710 the chain carries Phosphothreonine. Phosphoserine is present on residues Ser2222 and Ser2955. The interval 2945-2973 (SVTTNTTDSVSDEEKVSGGKDGNGSSTSV) is disordered. The interval 3189–3193 (HRRAR) is HRRAR loop; important for DIABLO/SMAC and HTRA2 binding. Residues 3819 to 4068 (DEKVTMFLQS…ESLLETCPIQ (250 aa)) enclose the Ubiquitin-like domain. The interval 3923–3949 (QSKRAVSATPPRPPSRRGRTIPDKIGS) is disordered. Phosphothreonine is present on Thr3931. Ser4023 carries the phosphoserine modification. The disordered stretch occupies residues 4260–4283 (RVPNSSVNQTEPQVSSSHNPTSTE). Polar residues predominate over residues 4261 to 4283 (VPNSSVNQTEPQVSSSHNPTSTE). A UBC core domain is found at 4573 to 4740 (ARARRLAQEA…IRQATVKWAM (168 aa)). Cys4666 acts as the Glycyl thioester intermediate in catalysis. The tract at residues 4835–4857 (EETLMHDQVKPSSSKELPSDFQL) is disordered. Residues 4844-4857 (KPSSSKELPSDFQL) are compositionally biased toward polar residues.

It belongs to the BIRC6 family. Homodimer; antiparallel. Interacts with RNF41. Interacts with DIABLO/SMAC, likely with higher affinity to SMAC dimer than SMAC monomer; this interaction blocks the substrate-binding site and inhibits the caspase inhibition activity of BIRC6. Interacts with KIF23/MKLP1, USP8/UBPY, BIRC5/survivin, MAP2K1/MEK1, RAB8A/RAB8, RAB11A/RAB11, PLK1, EXOC3/SEC6 and EXOC4/SEC8. Ubiquitinated; mediated by RNF41 E3 ligase and leads to proteasomal degradation, impairing inhibition of apoptosis. Deubiquitinated by USP8/UBPY. Autoubiquitinated; mediated by E1 ubiquitin activating enzyme UBA6. In terms of processing, proteolytically cleaved. Acts as substrate for CASP3, CASP6, CASP7, CASP9 and HTRA2. Expressed in brain cancer cells.

The protein resides in the golgi apparatus. The protein localises to the trans-Golgi network membrane. It localises to the endosome. It is found in the cytoplasm. Its subcellular location is the cytoskeleton. The protein resides in the spindle pole. The protein localises to the microtubule organizing center. It localises to the centrosome. It is found in the midbody. Its subcellular location is the midbody ring. It catalyses the reaction S-ubiquitinyl-[E1 ubiquitin-activating enzyme]-L-cysteine + [acceptor protein]-L-lysine = [E1 ubiquitin-activating enzyme]-L-cysteine + N(6)-monoubiquitinyl-[acceptor protein]-L-lysine.. Inhibited by DIABLO/SMAC, which competes for the substrate-binding sites on BIRC6. BIRC6 inhibits caspases and protease by ubiquitination but BIRC6 itself is subjected to protease cleavage by CASP3, CASP6, CASP7, CASP9 and HTRA2 by protease cleavage. Its function is as follows. Anti-apoptotic protein known as inhibitor of apoptosis (IAP) which can regulate cell death by controlling caspases and by acting as an E3 ubiquitin-protein ligase. Unlike most IAPs, does not contain a RING domain and it is not a RING-type E3 ligase. Instead acts as a dual E2/E3 enzyme that combines ubiquitin conjugating (E2) and ubiquitin ligase (E3) activities in a single polypeptide. Ubiquitination is mediated by a non-canonical E1 ubiquitin activating enzyme UBA6. Ubiquitinates CASP3, CASP7 and CASP9 and inhibits their caspase activity; also ubiquitinates their procaspases but to a weaker extent. Ubiquitinates pro-apoptotic factors DIABLO/SMAC and HTRA2. DIABLO/SMAC antagonizes the caspase inhibition activity of BIRC6 by competing for the same binding sites as the caspases. Ubiquitinates the autophagy protein MAP1LC3B; this activity is also inhibited by DIABLO/SMAC. Important regulator for the final stages of cytokinesis. Crucial for normal vesicle targeting to the site of abscission, but also for the integrity of the midbody and the midbody ring, and its striking ubiquitin modification. This chain is Dual E2 ubiquitin-conjugating enzyme/E3 ubiquitin-protein ligase BIRC6 (BIRC6), found in Homo sapiens (Human).